The sequence spans 280 residues: Tryptophan synthase alpha chain (280 aa).

Catalysis depends on proton acceptor residues Glu-50 and Asp-61.

It belongs to the TrpA family. In terms of assembly, tetramer of two alpha and two beta chains.

The enzyme catalyses (1S,2R)-1-C-(indol-3-yl)glycerol 3-phosphate + L-serine = D-glyceraldehyde 3-phosphate + L-tryptophan + H2O. Its pathway is amino-acid biosynthesis; L-tryptophan biosynthesis; L-tryptophan from chorismate: step 5/5. The alpha subunit is responsible for the aldol cleavage of indoleglycerol phosphate to indole and glyceraldehyde 3-phosphate. This Methylorubrum extorquens (strain PA1) (Methylobacterium extorquens) protein is Tryptophan synthase alpha chain.